Consider the following 215-residue polypeptide: Probable phosphoglycerate mutase GpmB (215 aa).

Substrate is bound by residues 8-15 (RHGETQWN), 21-22 (QG), arginine 58, lysine 60, 82-85 (ELDM), 104-105 (RR), and 151-152 (GI). The active-site Tele-phosphohistidine intermediate is histidine 9. Glutamate 82 (proton donor/acceptor) is an active-site residue.

This sequence belongs to the phosphoglycerate mutase family. GpmB subfamily.

The enzyme catalyses (2R)-2-phosphoglycerate = (2R)-3-phosphoglycerate. It functions in the pathway carbohydrate degradation; glycolysis; pyruvate from D-glyceraldehyde 3-phosphate: step 3/5. This chain is Probable phosphoglycerate mutase GpmB, found in Salmonella choleraesuis (strain SC-B67).